The primary structure comprises 301 residues: MLLWAGYASEKQVSIMTGNEMIAHLDKNKYEIVPITLNEKMDLIEKAKDIDFALLALHGKYGEDGTVQGTLESLGIPYSGSNMLSSSICMDKNISKKILRYEGVETPDWIELTKMEDLNLDELDKLGFPLVVKPNSGGSSVGVKIVYNKNELISMLETVFEWDSEVVIEKYIKGDEITCSILDGKQLPIVSIRHAAEFFDYNAKYDDTSTVEEVIELPAQIKERVNKASLTCYKALKCSVYARVDMMVKDGIPYVMEINTLPGMTQSSLLPKSAEAAGISYSKLLDMIIETSLKVRNEEGF.

The ATP-grasp domain occupies 96 to 290; the sequence is KKILRYEGVE…YSKLLDMIIE (195 aa). 123–178 serves as a coordination point for ATP; the sequence is LDKLGFPLVVKPNSGGSSVGVKIVYNKNELISMLETVFEWDSEVVIEKYIKGDEIT. Residues Asp245, Glu257, and Asn259 each contribute to the Mg(2+) site.

The protein belongs to the D-alanine--D-alanine ligase family. Requires Mg(2+) as cofactor. It depends on Mn(2+) as a cofactor.

It is found in the cytoplasm. It carries out the reaction 2 D-alanine + ATP = D-alanyl-D-alanine + ADP + phosphate + H(+). Its pathway is cell wall biogenesis; peptidoglycan biosynthesis. Functionally, cell wall formation. The sequence is that of D-alanine--D-alanine ligase A from Bacillus cereus (strain ATCC 14579 / DSM 31 / CCUG 7414 / JCM 2152 / NBRC 15305 / NCIMB 9373 / NCTC 2599 / NRRL B-3711).